A 71-amino-acid chain; its full sequence is UPF0435 protein SERP1418 (71 aa).

Belongs to the UPF0435 family.

This Staphylococcus epidermidis (strain ATCC 35984 / DSM 28319 / BCRC 17069 / CCUG 31568 / BM 3577 / RP62A) protein is UPF0435 protein SERP1418.